The sequence spans 98 residues: Large ribosomal subunit protein bL21 (98 aa).

It belongs to the bacterial ribosomal protein bL21 family. As to quaternary structure, part of the 50S ribosomal subunit. Contacts protein L20.

Its function is as follows. This protein binds to 23S rRNA in the presence of protein L20. This chain is Large ribosomal subunit protein bL21, found in Novosphingobium aromaticivorans (strain ATCC 700278 / DSM 12444 / CCUG 56034 / CIP 105152 / NBRC 16084 / F199).